Consider the following 226-residue polypeptide: Protease RseP (226 aa).

In terms of domain architecture, PDZ spans 1 to 56; sequence VEKVIPGSAAEKAGLQKGDRIVKVGSQEIDVWHTFTSFVSNNPNVPLELSVDRAGH. Transmembrane regions (helical) follow at residues 152–174 and 202–221; these read LVYY…LIPL and FSYR…ALFN.

This sequence belongs to the peptidase M50B family. In terms of assembly, interacts with RseA. Zn(2+) serves as cofactor.

It is found in the cell inner membrane. Functionally, a site-2 regulated intramembrane protease (S2P) that cleaves the peptide bond between 'Ala-108' and 'Cys-109' in the transmembrane region of RseA. Part of a regulated intramembrane proteolysis (RIP) cascade. Acts on DegS-cleaved RseA to release the cytoplasmic domain of RseA. This provides the cell with sigma-E (RpoE) activity through the proteolysis of RseA. This chain is Protease RseP (rseP), found in Photorhabdus luminescens (Xenorhabdus luminescens).